We begin with the raw amino-acid sequence, 763 residues long: Phosphoglycerol transferase I (763 aa).

A run of 4 helical transmembrane segments spans residues 4-19, 26-48, 76-98, and 105-127; these read LLSF…IYAW, WWFA…LFAS, YILP…GWIL, and PHHF…ASPA.

This sequence belongs to the OpgB family.

The protein resides in the cell inner membrane. The enzyme catalyses a phosphatidylglycerol + a membrane-derived-oligosaccharide D-glucose = a 1,2-diacyl-sn-glycerol + a membrane-derived-oligosaccharide 6-(glycerophospho)-D-glucose.. The protein operates within glycan metabolism; osmoregulated periplasmic glucan (OPG) biosynthesis. In terms of biological role, transfers a phosphoglycerol residue from phosphatidylglycerol to the membrane-bound nascent glucan backbones. This Escherichia coli O6:H1 (strain CFT073 / ATCC 700928 / UPEC) protein is Phosphoglycerol transferase I.